We begin with the raw amino-acid sequence, 357 residues long: 4-hydroxyphenylpyruvate dioxygenase (357 aa).

VOC domains follow at residues 17-137 (GFEF…LVDR) and 165-316 (YIDH…IFTD). Fe cation contacts are provided by H168, H246, and E325.

It belongs to the 4HPPD family. Homotetramer. Requires Fe cation as cofactor.

It catalyses the reaction 3-(4-hydroxyphenyl)pyruvate + O2 = homogentisate + CO2. It participates in amino-acid degradation; L-phenylalanine degradation; acetoacetate and fumarate from L-phenylalanine: step 3/6. The sequence is that of 4-hydroxyphenylpyruvate dioxygenase (hpd) from Pseudomonas aeruginosa (strain ATCC 15692 / DSM 22644 / CIP 104116 / JCM 14847 / LMG 12228 / 1C / PRS 101 / PAO1).